The following is a 104-amino-acid chain: Flagellar hook-basal body complex protein FliE (104 aa).

This sequence belongs to the FliE family.

The protein resides in the bacterial flagellum basal body. This chain is Flagellar hook-basal body complex protein FliE, found in Escherichia coli (strain SE11).